Reading from the N-terminus, the 83-residue chain is Protein Vpr (83 aa).

Position 79 is a phosphoserine; by host (serine 79).

In terms of assembly, interacts with human UNG.

The protein localises to the virion. It localises to the host nucleus. In terms of biological role, stimulates gene expression driven by the HIV-2 LTR. Prevents infected cells from undergoing mitosis and proliferating, by inducing arrest or delay in the G2 phase of the cell cycle. Cell cycle arrest creates a favorable environment for maximizing viral expression and production. The sequence is that of Protein Vpr from Pan troglodytes (Chimpanzee).